The following is a 727-amino-acid chain: 1,4-alpha-glucan branching enzyme GlgB (727 aa).

The Nucleophile role is filled by aspartate 405. Glutamate 458 functions as the Proton donor in the catalytic mechanism.

It belongs to the glycosyl hydrolase 13 family. GlgB subfamily. Monomer.

The catalysed reaction is Transfers a segment of a (1-&gt;4)-alpha-D-glucan chain to a primary hydroxy group in a similar glucan chain.. Its pathway is glycan biosynthesis; glycogen biosynthesis. Its function is as follows. Catalyzes the formation of the alpha-1,6-glucosidic linkages in glycogen by scission of a 1,4-alpha-linked oligosaccharide from growing alpha-1,4-glucan chains and the subsequent attachment of the oligosaccharide to the alpha-1,6 position. This is 1,4-alpha-glucan branching enzyme GlgB from Yersinia pestis bv. Antiqua (strain Antiqua).